The following is a 391-amino-acid chain: Rhizopuspepsin-2 (391 aa).

An N-terminal signal peptide occupies residues 1–21 (MKLTLISSCVALAFMALATEA). The propeptide at 22 to 68 (APSGKKLSIPLTKNTNYKPSAKNAIQKALAKYHRFRTTSSSNSTSTE) is activation peptide. Positions 84-388 (YYGKVTVGTP…NQEVPEVQIA (305 aa)) constitute a Peptidase A1 domain. The active site involves D102. A disulfide bond links C115 and C118. D285 is an active-site residue. C319 and C352 are joined by a disulfide.

This sequence belongs to the peptidase A1 family.

It catalyses the reaction Hydrolysis of proteins with broad specificity similar to that of pepsin A, preferring hydrophobic residues at P1 and P1'. Clots milk and activates trypsinogen. Does not cleave 4-Gln-|-His-5, but does cleave 10-His-|-Leu-11 and 12-Val-|-Glu-13 in B chain of insulin.. The polypeptide is Rhizopuspepsin-2 (Rhizopus niveus).